The sequence spans 534 residues: Phosphoenolpyruvate carboxykinase (ATP) (534 aa).

The substrate site is built by Arg58, Tyr194, and Lys200. Residues Lys200, His219, and 235-243 contribute to the ATP site; that span reads GLSGTGKTT. The Mn(2+) site is built by Lys200 and His219. Asp256 lines the Mn(2+) pocket. Residues Glu284, Arg322, and Thr449 each coordinate ATP. Arg322 provides a ligand contact to substrate.

The protein belongs to the phosphoenolpyruvate carboxykinase (ATP) family. Requires Mn(2+) as cofactor.

The protein resides in the cytoplasm. The enzyme catalyses oxaloacetate + ATP = phosphoenolpyruvate + ADP + CO2. It participates in carbohydrate biosynthesis; gluconeogenesis. Functionally, involved in the gluconeogenesis. Catalyzes the conversion of oxaloacetate (OAA) to phosphoenolpyruvate (PEP) through direct phosphoryl transfer between the nucleoside triphosphate and OAA. This is Phosphoenolpyruvate carboxykinase (ATP) from Novosphingobium aromaticivorans (strain ATCC 700278 / DSM 12444 / CCUG 56034 / CIP 105152 / NBRC 16084 / F199).